The primary structure comprises 145 residues: Small ribosomal subunit protein uS12A (145 aa).

Position 64 is a hydroxyproline (Pro-64).

The protein belongs to the universal ribosomal protein uS12 family.

The sequence is that of Small ribosomal subunit protein uS12A (RPS23A) from Naumovozyma castellii (Yeast).